The following is a 153-amino-acid chain: Partner of bursicon (153 aa).

A signal peptide spans 1 to 35 (MCNSVRTALAASNCCSIVLCCVLLLTLTLTVAVTA). Intrachain disulfides connect C44/C102, C68/C117, C77/C143, C81/C145, and C99/C148. The CTCK domain occupies 44–139 (CETLPSEIHL…SATMEIRLKE (96 aa)).

As to quaternary structure, heterodimer of burs and pburs.

The protein resides in the secreted. Final heterodimeric neurohormone released at the end of the molting cycle, involved in the sclerotization (tanning) of the insect cuticle, melanization and wing spreading. In Anopheles gambiae (African malaria mosquito), this protein is Partner of bursicon.